The chain runs to 324 residues: Acetyl-coenzyme A carboxylase carboxyl transferase subunit alpha (324 aa).

The 255-residue stretch at 37-291 (ILEDKLENLE…DLMIRKTFEQ (255 aa)) folds into the CoA carboxyltransferase C-terminal domain.

This sequence belongs to the AccA family. In terms of assembly, acetyl-CoA carboxylase is a heterohexamer composed of biotin carboxyl carrier protein (AccB), biotin carboxylase (AccC) and two subunits each of ACCase subunit alpha (AccA) and ACCase subunit beta (AccD).

It localises to the cytoplasm. It carries out the reaction N(6)-carboxybiotinyl-L-lysyl-[protein] + acetyl-CoA = N(6)-biotinyl-L-lysyl-[protein] + malonyl-CoA. Its pathway is lipid metabolism; malonyl-CoA biosynthesis; malonyl-CoA from acetyl-CoA: step 1/1. Functionally, component of the acetyl coenzyme A carboxylase (ACC) complex. First, biotin carboxylase catalyzes the carboxylation of biotin on its carrier protein (BCCP) and then the CO(2) group is transferred by the carboxyltransferase to acetyl-CoA to form malonyl-CoA. The chain is Acetyl-coenzyme A carboxylase carboxyl transferase subunit alpha from Bacillus cereus (strain G9842).